We begin with the raw amino-acid sequence, 1178 residues long: Phosphate system positive regulatory protein PHO81 (1178 aa).

The 169-residue stretch at 1-169 (MKFGKYLEAR…QSHDKDFYLA (169 aa)) folds into the SPX domain. The segment at 210-250 (QSSTFTNDDDDDNNTSNNNKHNNNNNNNNNNNNNNNNNNIL) is disordered. Residues 223–250 (NTSNNNKHNNNNNNNNNNNNNNNNNNIL) show a composition bias toward low complexity. ANK repeat units follow at residues 423–452 (HSRVPLHYAAELGKLEFVHSLLITNLLEDV), 458–487 (DSKTPLVLAITNNHIDVVRDLLTIGGANAS), 506–535 (VQFDPLNVACKFNNHDAAKLLLEIRSKQNA), 556–586 (TGLCTLHIVAKIGGDPQLIQLLIRYGADPNE), 591–620 (NKWTPIFYAVRSGHSEVITELLKHNARLDI), and 624–653 (NGHSPLFYALWESHVDVLNALLQRPLNLPS). Residues 871-1178 (IINYEPYWKS…ELLFENNIDM (308 aa)) form the GP-PDE domain. Ser-956 carries the post-translational modification Phosphoserine.

Associates specifically with the PHO80-PHO85 and PCL7-PHO85 cyclin-CDK complexes, and much of this interaction is mediated through the PHO80 and PCL7 cyclin subunits. Interacts with the transcription factor PHO4. Phosphorylated by the cyclin-CDK PHO80-PHO85. Phosphorylation mediates the formation of a stable interaction with the cyclin-CDK and is required for function as an active inhibitor of the complex under phosphate starvation conditions.

It localises to the cytoplasm. The protein localises to the nucleus. Inhibits the kinase activity of the cyclin-CDKs PHO80-PHO85 and PCL7-PHO85 under low-phosphate conditions. The polypeptide is Phosphate system positive regulatory protein PHO81 (PHO81) (Saccharomyces cerevisiae (strain ATCC 204508 / S288c) (Baker's yeast)).